Here is a 129-residue protein sequence, read N- to C-terminus: Large ribosomal subunit protein bL12 (129 aa).

Belongs to the bacterial ribosomal protein bL12 family. Homodimer. Part of the ribosomal stalk of the 50S ribosomal subunit. Forms a multimeric L10(L12)X complex, where L10 forms an elongated spine to which 2 to 4 L12 dimers bind in a sequential fashion. Binds GTP-bound translation factors.

Forms part of the ribosomal stalk which helps the ribosome interact with GTP-bound translation factors. Is thus essential for accurate translation. This is Large ribosomal subunit protein bL12 from Maridesulfovibrio salexigens (strain ATCC 14822 / DSM 2638 / NCIMB 8403 / VKM B-1763) (Desulfovibrio salexigens).